The chain runs to 124 residues: Ribonuclease pancreatic (124 aa).

The span at 1-15 shows a compositional bias: basic and acidic residues; sequence KESPAKKFQRQHMDP. The disordered stretch occupies residues 1–24; it reads KESPAKKFQRQHMDPDSSSSNSSN. Substrate contacts are provided by Lys7 and Arg10. The active-site Proton acceptor is the His12. N-linked (GlcNAc...) asparagine glycans are attached at residues Asn21 and Asn34. 4 cysteine pairs are disulfide-bonded: Cys26–Cys84, Cys40–Cys95, Cys58–Cys110, and Cys65–Cys72. Substrate-binding positions include 41-45 and Lys66; that span reads KPVNT. An N-linked (GlcNAc...) asparagine glycan is attached at Asn76. Arg85 is a substrate binding site. His119 serves as the catalytic Proton donor.

The protein belongs to the pancreatic ribonuclease family. As to quaternary structure, monomer. Interacts with and forms tight 1:1 complexes with RNH1. Dimerization of two such complexes may occur. Interaction with RNH1 inhibits this protein. Pancreas.

It localises to the secreted. It carries out the reaction an [RNA] containing cytidine + H2O = an [RNA]-3'-cytidine-3'-phosphate + a 5'-hydroxy-ribonucleotide-3'-[RNA].. The catalysed reaction is an [RNA] containing uridine + H2O = an [RNA]-3'-uridine-3'-phosphate + a 5'-hydroxy-ribonucleotide-3'-[RNA].. Functionally, endonuclease that catalyzes the cleavage of RNA on the 3' side of pyrimidine nucleotides. Acts on single-stranded and double-stranded RNA. The chain is Ribonuclease pancreatic (RNASE1) from Sus scrofa (Pig).